The sequence spans 358 residues: Glutamate 5-kinase (358 aa).

Residue Lys-9 coordinates ATP. Residues Ser-49, Asp-136, and Asn-148 each contribute to the substrate site. ATP-binding positions include 168-169 (TD) and 210-216 (TGGMTTK). The region spanning 275–353 (DAAVEVDAGA…RAEGVLIHRN (79 aa)) is the PUA domain.

The protein belongs to the glutamate 5-kinase family.

The protein resides in the cytoplasm. It catalyses the reaction L-glutamate + ATP = L-glutamyl 5-phosphate + ADP. Its pathway is amino-acid biosynthesis; L-proline biosynthesis; L-glutamate 5-semialdehyde from L-glutamate: step 1/2. Functionally, catalyzes the transfer of a phosphate group to glutamate to form L-glutamate 5-phosphate. This is Glutamate 5-kinase from Streptococcus suis (strain 05ZYH33).